We begin with the raw amino-acid sequence, 580 residues long: N(6)-adenosine-methyltransferase catalytic subunit METTL3 (580 aa).

The interval Met1 to Pro70 is disordered. Ser2 is modified (N-acetylserine; alternate). Phosphoserine; alternate is present on Ser2. A compositionally biased stretch (basic and acidic residues) spans Gln28 to Asn37. 3 positions are modified to phosphoserine: Ser43, Ser48, and Ser50. Low complexity predominate over residues Ala55–Ser67. Glycyl lysine isopeptide (Lys-Gly) (interchain with G-Cter in SUMO1) cross-links involve residues Lys177, Lys211, Lys212, and Lys215. The disordered stretch occupies residues Leu198–Ala217. A Nuclear localization signal motif is present at residues Ala210–Lys215. 3 positions are modified to phosphoserine: Ser219, Ser243, and Ser350. S-adenosyl-L-methionine contacts are provided by residues Asp377–Ile378 and Asp395. The segment at Pro396–Thr410 is gate loop 1. Interaction with METTL14 stretches follow at residues Glu450–Glu454 and Gln464–Lys480. The tract at residues Gln462–Gly479 is interphase loop. The interval Arg465–His478 is positively charged region required for RNA-binding. Residues Val507–Asp515 form a gate loop 2 region. S-adenosyl-L-methionine contacts are provided by residues Lys513, Arg536–Asn539, and Asn549–Gln550.

The protein belongs to the MT-A70-like family. In terms of assembly, heterodimer; heterodimerizes with METTL14 to form an antiparallel heterodimer that constitutes an active methyltransferase. Component of the WMM complex, a N6-methyltransferase complex composed of a catalytic subcomplex, named MAC, and of an associated subcomplex, named MACOM. The MAC subcomplex is composed of METTL3 and METTL14. The MACOM subcomplex is composed of WTAP, ZC3H13, CBLL1/HAKAI, VIRMA, and, in some cases of RBM15 (RBM15 or RBM15B). Interacts with NCBP1/CBP80. Interacts with EIF4E. Interacts with EIF3B. Post-translationally, sumoylation inhibits the N6-adenosine-methyltransferase activity. Sumoylation does not affect subcellular location or interaction with METTL14. Desumoylated by SENP1. As to expression, present in both germ cells and somatic cells during testis development (at protein level).

Its subcellular location is the nucleus. The protein localises to the nucleus speckle. It is found in the cytoplasm. The enzyme catalyses an adenosine in mRNA + S-adenosyl-L-methionine = an N(6)-methyladenosine in mRNA + S-adenosyl-L-homocysteine + H(+). With respect to regulation, methyltransferase activity is regulated by miRNAs via a sequence pairing mechanism. Methyltransferase activity is inhibited by sumoylation. Its function is as follows. The METTL3-METTL14 heterodimer forms a N6-methyltransferase complex that methylates adenosine residues at the N(6) position of some RNAs and regulates various processes such as the circadian clock, differentiation of embryonic and hematopoietic stem cells, cortical neurogenesis, response to DNA damage, differentiation of T-cells and primary miRNA processing. In the heterodimer formed with METTL14, METTL3 constitutes the catalytic core. N6-methyladenosine (m6A), which takes place at the 5'-[AG]GAC-3' consensus sites of some mRNAs, plays a role in mRNA stability, processing, translation efficiency and editing. M6A acts as a key regulator of mRNA stability: methylation is completed upon the release of mRNA into the nucleoplasm and promotes mRNA destabilization and degradation. In embryonic stem cells (ESCs), m6A methylation of mRNAs encoding key naive pluripotency-promoting transcripts results in transcript destabilization, promoting differentiation of ESCs. M6A regulates the length of the circadian clock: acts as an early pace-setter in the circadian loop by putting mRNA production on a fast-track for facilitating nuclear processing, thereby providing an early point of control in setting the dynamics of the feedback loop. M6A also regulates circadian regulation of hepatic lipid metabolism. M6A regulates spermatogonial differentiation and meiosis and is essential for male fertility and spermatogenesis. Also required for oogenesis. Involved in the response to DNA damage: in response to ultraviolet irradiation, METTL3 rapidly catalyzes the formation of m6A on poly(A) transcripts at DNA damage sites, leading to the recruitment of POLK to DNA damage sites. M6A is also required for T-cell homeostasis and differentiation: m6A methylation of transcripts of SOCS family members (SOCS1, SOCS3 and CISH) in naive T-cells promotes mRNA destabilization and degradation, promoting T-cell differentiation. Inhibits the type I interferon response by mediating m6A methylation of IFNB. M6A also regulates cortical neurogenesis: m6A methylation of transcripts related to transcription factors, neural stem cells, the cell cycle and neuronal differentiation during brain development promotes their destabilization and decay, promoting differentiation of radial glial cells. M6A also takes place in other RNA molecules, such as primary miRNA (pri-miRNAs). Mediates m6A methylation of Xist RNA, thereby participating in random X inactivation: m6A methylation of Xist leads to target YTHDC1 reader on Xist and promote transcription repression activity of Xist. METTL3 mediates methylation of pri-miRNAs, marking them for recognition and processing by DGCR8. Acts as a positive regulator of mRNA translation independently of the methyltransferase activity: promotes translation by interacting with the translation initiation machinery in the cytoplasm. The chain is N(6)-adenosine-methyltransferase catalytic subunit METTL3 from Mus musculus (Mouse).